Consider the following 552-residue polypeptide: Urocanate hydratase (552 aa).

NAD(+)-binding positions include 49 to 50, glutamine 127, 173 to 175, aspartate 193, 239 to 240, 260 to 264, 270 to 271, and tyrosine 319; these read GG, GMG, NA, QTSAH, and YI. The active site involves cysteine 407. Residue glycine 489 participates in NAD(+) binding.

This sequence belongs to the urocanase family. NAD(+) is required as a cofactor.

The protein resides in the cytoplasm. It catalyses the reaction 4-imidazolone-5-propanoate = trans-urocanate + H2O. It participates in amino-acid degradation; L-histidine degradation into L-glutamate; N-formimidoyl-L-glutamate from L-histidine: step 2/3. Its function is as follows. Catalyzes the conversion of urocanate to 4-imidazolone-5-propionate. The protein is Urocanate hydratase of Bacillus mycoides (strain KBAB4) (Bacillus weihenstephanensis).